The primary structure comprises 346 residues: Holliday junction branch migration complex subunit RuvB (346 aa).

The tract at residues 1–188 (MSDEYGPPER…FGIVQRLAYY (188 aa)) is large ATPase domain (RuvB-L). Residues Leu-27, Arg-28, Gly-69, Lys-72, Thr-73, Thr-74, 135 to 137 (EDF), Arg-178, Tyr-188, and Arg-225 each bind ATP. Thr-73 is a binding site for Mg(2+). The small ATPAse domain (RuvB-S) stretch occupies residues 189-259 (PVDELTRIVQ…VAADAMELLD (71 aa)). Positions 262-346 (RNGLDEQDRR…QAAGSGDLFG (85 aa)) are head domain (RuvB-H). Arg-298, Arg-317, and Arg-322 together coordinate DNA.

Belongs to the RuvB family. In terms of assembly, homohexamer. Forms an RuvA(8)-RuvB(12)-Holliday junction (HJ) complex. HJ DNA is sandwiched between 2 RuvA tetramers; dsDNA enters through RuvA and exits via RuvB. An RuvB hexamer assembles on each DNA strand where it exits the tetramer. Each RuvB hexamer is contacted by two RuvA subunits (via domain III) on 2 adjacent RuvB subunits; this complex drives branch migration. In the full resolvosome a probable DNA-RuvA(4)-RuvB(12)-RuvC(2) complex forms which resolves the HJ.

It is found in the cytoplasm. The enzyme catalyses ATP + H2O = ADP + phosphate + H(+). The RuvA-RuvB-RuvC complex processes Holliday junction (HJ) DNA during genetic recombination and DNA repair, while the RuvA-RuvB complex plays an important role in the rescue of blocked DNA replication forks via replication fork reversal (RFR). RuvA specifically binds to HJ cruciform DNA, conferring on it an open structure. The RuvB hexamer acts as an ATP-dependent pump, pulling dsDNA into and through the RuvAB complex. RuvB forms 2 homohexamers on either side of HJ DNA bound by 1 or 2 RuvA tetramers; 4 subunits per hexamer contact DNA at a time. Coordinated motions by a converter formed by DNA-disengaged RuvB subunits stimulates ATP hydrolysis and nucleotide exchange. Immobilization of the converter enables RuvB to convert the ATP-contained energy into a lever motion, pulling 2 nucleotides of DNA out of the RuvA tetramer per ATP hydrolyzed, thus driving DNA branch migration. The RuvB motors rotate together with the DNA substrate, which together with the progressing nucleotide cycle form the mechanistic basis for DNA recombination by continuous HJ branch migration. Branch migration allows RuvC to scan DNA until it finds its consensus sequence, where it cleaves and resolves cruciform DNA. The sequence is that of Holliday junction branch migration complex subunit RuvB from Halorhodospira halophila (strain DSM 244 / SL1) (Ectothiorhodospira halophila (strain DSM 244 / SL1)).